A 361-amino-acid chain; its full sequence is 3-dehydroquinate synthase (361 aa).

The protein belongs to the archaeal-type DHQ synthase family.

The catalysed reaction is 2-amino-2,3,7-trideoxy-D-lyxo-hept-6-ulosonate + NAD(+) + H2O = 3-dehydroquinate + NH4(+) + NADH + H(+). Functionally, catalyzes the oxidative deamination and cyclization of 2-amino-3,7-dideoxy-D-threo-hept-6-ulosonic acid (ADH) to yield 3-dehydroquinate (DHQ), which is fed into the canonical shikimic pathway of aromatic amino acid biosynthesis. The chain is 3-dehydroquinate synthase (aroB') from Methanocaldococcus jannaschii (strain ATCC 43067 / DSM 2661 / JAL-1 / JCM 10045 / NBRC 100440) (Methanococcus jannaschii).